Consider the following 406-residue polypeptide: MSKLYVGSEVGQLRRVLLNRPERALTHLTPSNCHELLFDDVLLVEAAGKEHDAFADTLRQQGVEVLLLHDLMVDTLAVPEAKQWLLDVQISDFRYGPIFARDLRRYLSEMDNEHLATILLGGLAYSELPIQSASMLPRMKQPLDFVIEPLPNHLFTRDTSCWVYGGVSLNPMMKPARQRETNHLRAIYQWHPIFAGQDFIKYFGNEDLHYDNANIEGGDVLVIGKGAVLIGMSERTTPQGVENLAANLFRHGQAKEVIAIELPKHRSCMHLDTVMTHMDVDTFSVYPEIMRKDLHTWRLTPKGNGEMQVEALHNYLHAIERALGLNHLNIITTGGDSYEAEREQWNDANNVLTVKPGVVIGYERNVYTNEKYDKAGIEVLTIPGNELGRGRGGARCMSCPIERDDI.

The active-site Amidino-cysteine intermediate is C396.

This sequence belongs to the arginine deiminase family.

Its subcellular location is the cytoplasm. The enzyme catalyses L-arginine + H2O = L-citrulline + NH4(+). Its pathway is amino-acid degradation; L-arginine degradation via ADI pathway; carbamoyl phosphate from L-arginine: step 1/2. In Vibrio vulnificus (strain YJ016), this protein is Arginine deiminase.